The chain runs to 410 residues: Adenosine receptor A2a (410 aa).

At 1–4 the chain is on the extracellular side; it reads MGSS. The helical transmembrane segment at 5–29 threads the bilayer; it reads VYITVELAIAVLAILGNVLVCWAVW. At 30–39 the chain is on the cytoplasmic side; sequence INSNLQNVTN. A helical transmembrane segment spans residues 40–63; it reads FFVVSLAAADIAVGVLAIPFAITI. Over 64 to 74 the chain is Extracellular; sequence STGFCAACHGC. 3 disulfides stabilise this stretch: cysteine 68-cysteine 154, cysteine 71-cysteine 143, and cysteine 74-cysteine 161. The helical transmembrane segment at 75–97 threads the bilayer; it reads LFFACFVLVLTQSSIFSLLAIAI. Residues 98 to 117 are Cytoplasmic-facing; the sequence is DRYIAIRIPLRYNGLVTGVR. Residues 118–140 form a helical membrane-spanning segment; it reads AKGIIAICWVLSFAIGLTPMLGW. Over 141–168 the chain is Extracellular; it reads NNCSQKDGNSTKTCGEGRVTCLFEDVVP. N-linked (GlcNAc...) asparagine glycans are attached at residues asparagine 142 and asparagine 149. Residue glutamate 164 coordinates adenosine. Residues 169-193 traverse the membrane as a helical segment; the sequence is MNYMVYYNFFAFVLLPLLLMLAIYL. Over 194–229 the chain is Cytoplasmic; sequence RIFLAARRQLKQMESQPLPGERTRSTLQKEVHAAKS. Residues 230 to 253 form a helical membrane-spanning segment; that stretch reads LAIIVGLFALCWLPLHIINCFTFF. Residue asparagine 248 participates in adenosine binding. The cysteines at positions 254 and 257 are disulfide-linked. At 254-261 the chain is on the extracellular side; that stretch reads CSTCRHAP. A helical transmembrane segment spans residues 262 to 285; the sequence is PWLMYLAIILSHSNSVVNPFIYAY. 2 residues coordinate adenosine: serine 272 and histidine 273. The Cytoplasmic portion of the chain corresponds to 286-410; that stretch reads RIREFRQTFR…SSWSSEFAPS (125 aa). The interaction with GAS2L2 stretch occupies residues 322-410; that stretch reads HSTEGEQVSL…SSWSSEFAPS (89 aa). Residues 344–410 form a disordered region; sequence GSATHSGRRP…SSWSSEFAPS (67 aa). The segment covering 371 to 388 has biased composition (basic and acidic residues); that stretch reads RDVELPTQERQEGQEHPG. Residues 401–410 are compositionally biased toward polar residues; the sequence is SSWSSEFAPS.

This sequence belongs to the G-protein coupled receptor 1 family. In terms of assembly, interacts (via cytoplasmic C-terminal domain) with USP4; the interaction is direct. May interact with DRD4. Interacts with NECAB2. Interacts (via cytoplasmic C-terminal domain) with GAS2L2; interaction enhances receptor-mediated adenylyl cyclase activity. Post-translationally, ubiquitinated. Deubiquitinated by USP4; leading to stabilization and expression at the cell surface. As to expression, expressed in striatal neurons (at protein level).

The protein resides in the cell membrane. Functionally, receptor for adenosine. The activity of this receptor is mediated by G proteins which activate adenylyl cyclase. The chain is Adenosine receptor A2a (Adora2a) from Rattus norvegicus (Rat).